We begin with the raw amino-acid sequence, 298 residues long: MSIRSLGYMGFAVSDVAAWRSFLTQKLGLMEAGTTDNGDLFRIDSRAWRIAVQQGEVDDLAFAGYEVADAAGLAQMADKLKQAGIAVTTGDASLARRRGVTGLITFADPFGLPLEIYYGASEVFEKPFLPGAAVSGFLTGEQGLGHFVRCVPDSDKALAFYTDVLGFQLSDVIDMKMGPDVTVPAYFLHCNERHHTLAIAAFPLPKRIHHFMLEVASLDDVGFAFDRVDADGLITSTLGRHTNDHMVSFYASTPSGVEVEYGWSARTVDRSWVVVRHDSPSMWGHKSVRDKAAARNKA.

VOC domains follow at residues 5–119 (SLGY…IYYG) and 143–264 (GLGH…YGWS). His-146, His-210, and Glu-260 together coordinate Fe cation.

The protein belongs to the extradiol ring-cleavage dioxygenase family. Homooctamer. The enzyme is composed of two planar tetramers rotated at 45 degrees relative to each other, with a channel in the middle. The cofactor is Fe(2+).

It carries out the reaction biphenyl-2,3-diol + O2 = 2-hydroxy-6-oxo-6-phenylhexa-2,4-dienoate + H(+). It participates in xenobiotic degradation; biphenyl degradation; 2-hydroxy-2,4-pentadienoate and benzoate from biphenyl: step 3/4. In terms of biological role, shows a preference for catechols with groups immediately adjacent to the hydroxyl substituents. The protein is Biphenyl-2,3-diol 1,2-dioxygenase (bphC) of Paraburkholderia xenovorans (strain LB400).